Consider the following 506-residue polypeptide: Maturase K (506 aa).

Belongs to the intron maturase 2 family. MatK subfamily.

It is found in the plastid. The protein localises to the chloroplast. In terms of biological role, usually encoded in the trnK tRNA gene intron. Probably assists in splicing its own and other chloroplast group II introns. This Trifolium beckwithii (Beckwith's clover) protein is Maturase K.